The chain runs to 155 residues: Ribosome maturation factor RimP (155 aa).

The protein belongs to the RimP family.

Its subcellular location is the cytoplasm. In terms of biological role, required for maturation of 30S ribosomal subunits. This chain is Ribosome maturation factor RimP, found in Staphylococcus saprophyticus subsp. saprophyticus (strain ATCC 15305 / DSM 20229 / NCIMB 8711 / NCTC 7292 / S-41).